The primary structure comprises 191 residues: Ribosomal RNA small subunit methyltransferase G (191 aa).

S-adenosyl-L-methionine is bound by residues G62, L67, 111 to 112 (IE), and R124.

This sequence belongs to the methyltransferase superfamily. RNA methyltransferase RsmG family.

The protein resides in the cytoplasm. It catalyses the reaction guanosine(527) in 16S rRNA + S-adenosyl-L-methionine = N(7)-methylguanosine(527) in 16S rRNA + S-adenosyl-L-homocysteine. Its function is as follows. Specifically methylates the N7 position of guanine in position 527 of 16S rRNA. In Rickettsia rickettsii (strain Sheila Smith), this protein is Ribosomal RNA small subunit methyltransferase G.